The following is a 554-amino-acid chain: Undecaprenyl phosphate-alpha-4-amino-4-deoxy-L-arabinose arabinosyl transferase (554 aa).

Helical transmembrane passes span 4–24, 87–107, 115–135, 178–198, 206–226, 262–282, 293–313, 315–335, 351–371, 384–404, and 414–434; these read LKDSGAALLALFFVLVYLLPV, FGSIFSTALSAVLVYWLATLL, VLATLIYLSFLLVFGIGTYAV, FMTKGFLALAVPVIAVLPIVI, LVVFGPIAIVCAVLLSLPWAL, YLPILCIGVLPWLGLLPGALF, ELFFLLSWVVMPLLFFSVAKG, LPTYILPCMAPLSLLMAAYAT, VINLLFGVACALVIVVIGLGL, QKVWLGVLAFAGWGVTGFITL, and AAACPLLFILLVGYLIPQQVV.

This sequence belongs to the glycosyltransferase 83 family.

Its subcellular location is the cell inner membrane. It catalyses the reaction 4-amino-4-deoxy-alpha-L-arabinopyranosyl di-trans,octa-cis-undecaprenyl phosphate + lipid IVA = lipid IIA + di-trans,octa-cis-undecaprenyl phosphate.. It functions in the pathway lipopolysaccharide metabolism; 4-amino-4-deoxy-beta-L-arabinose-lipid A biosynthesis. In terms of biological role, catalyzes the transfer of the L-Ara4N moiety of the glycolipid undecaprenyl phosphate-alpha-L-Ara4N to lipid A. The modified arabinose is attached to lipid A and is required for resistance to polymyxin and cationic antimicrobial peptides. This is Undecaprenyl phosphate-alpha-4-amino-4-deoxy-L-arabinose arabinosyl transferase from Yersinia pseudotuberculosis serotype O:1b (strain IP 31758).